The chain runs to 101 residues: Protein SPIRAL1-like 3 (101 aa).

A compositionally biased stretch (gly residues) spans 1 to 22; that stretch reads MGRGVSSGGGQSSLGYLFGGGE. Disordered regions lie at residues 1-54 and 73-101; these read MGRG…GIQS and TDRP…KDGK.

This sequence belongs to the SPIRAL1 family.

In terms of biological role, acts in maintaining the cortical microtubules organization essential for anisotropic cell growth. The sequence is that of Protein SPIRAL1-like 3 from Oryza sativa subsp. japonica (Rice).